The following is a 196-amino-acid chain: Ribosome maturation factor RimP (196 aa).

The tract at residues 163 to 196 (GLAPSKPTGPAPKRPKPKTNSSSNEPAAKKPRAE) is disordered.

It belongs to the RimP family.

The protein localises to the cytoplasm. In terms of biological role, required for maturation of 30S ribosomal subunits. The sequence is that of Ribosome maturation factor RimP from Stenotrophomonas maltophilia (strain R551-3).